We begin with the raw amino-acid sequence, 23 residues long: Cysteine-rich venom protein 24 (23 aa).

The disordered stretch occupies residues 1 to 23; sequence VDFASESXNKRENQQIVDKHNAL. Positions 8-23 are enriched in basic and acidic residues; that stretch reads XNKRENQQIVDKHNAL.

This sequence belongs to the CRISP family. Post-translationally, contains 8 disulfide bonds. As to expression, expressed by the venom gland.

The protein resides in the secreted. This is Cysteine-rich venom protein 24 from Naja kaouthia (Monocled cobra).